The chain runs to 96 residues: Small cysteine and glycine repeat-containing protein 7 (96 aa).

A 14 X 2 AA repeats of CG region spans residues 4–80 (CGCGSCGGCG…TCGSCGCGCG (77 aa)).

The protein belongs to the KRTAP type 28 family.

In the hair cortex, hair keratin intermediate filaments are embedded in an interfilamentous matrix, consisting of hair keratin-associated proteins (KRTAP), which are essential for the formation of a rigid and resistant hair shaft through their extensive disulfide bond cross-linking with abundant cysteine residues of hair keratins. The matrix proteins include the high-sulfur and high-glycine-tyrosine keratins. The sequence is that of Small cysteine and glycine repeat-containing protein 7 from Homo sapiens (Human).